We begin with the raw amino-acid sequence, 73 residues long: Heterin-2 (73 aa).

An N-terminal signal peptide occupies residues 1-22 (MQYKTFLVIFLAYLLVTEEALA). The propeptide occupies 47–73 (KRALKNIFDPYQKNLDLELERLLSQLQ).

This sequence belongs to the non-disulfide-bridged peptide (NDBP) superfamily. Medium-length antimicrobial peptide (group 3) family. As to expression, expressed by the venom gland.

It is found in the secreted. The protein localises to the target cell membrane. Amphipathic peptide with potent activities against Gram-positive bacteria (MIC=5.6-30.0 uM) and weaker activities against the tested Gram-negative bacteria (MIC=15 uM to &gt;45 uM). It has high hemolytic activity against human erythrocytes. May act by disrupting the integrity of the bacterial cell membrane. The protein is Heterin-2 of Heterometrus spinifer (Asia giant forest scorpion).